The following is a 254-amino-acid chain: Triosephosphate isomerase (254 aa).

9-11 lines the substrate pocket; it reads NWK. Histidine 96 serves as the catalytic Electrophile. Glutamate 169 (proton acceptor) is an active-site residue. Residues glycine 175, serine 215, and 236 to 237 each bind substrate; that span reads GG.

It belongs to the triosephosphate isomerase family. In terms of assembly, homodimer.

The protein resides in the cytoplasm. It catalyses the reaction D-glyceraldehyde 3-phosphate = dihydroxyacetone phosphate. The protein operates within carbohydrate biosynthesis; gluconeogenesis. It participates in carbohydrate degradation; glycolysis; D-glyceraldehyde 3-phosphate from glycerone phosphate: step 1/1. Functionally, involved in the gluconeogenesis. Catalyzes stereospecifically the conversion of dihydroxyacetone phosphate (DHAP) to D-glyceraldehyde-3-phosphate (G3P). This Borrelia recurrentis (strain A1) protein is Triosephosphate isomerase.